A 256-amino-acid polypeptide reads, in one-letter code: Type III pantothenate kinase (256 aa).

Asp6–Lys13 provides a ligand contact to ATP. Residues Tyr90 and Gly97 to Arg100 each bind substrate. Catalysis depends on Asp99, which acts as the Proton acceptor. An ATP-binding site is contributed by Thr123. Substrate is bound at residue Thr187.

This sequence belongs to the type III pantothenate kinase family. As to quaternary structure, homodimer. Requires NH4(+) as cofactor. The cofactor is K(+).

The protein localises to the cytoplasm. It catalyses the reaction (R)-pantothenate + ATP = (R)-4'-phosphopantothenate + ADP + H(+). The protein operates within cofactor biosynthesis; coenzyme A biosynthesis; CoA from (R)-pantothenate: step 1/5. Its function is as follows. Catalyzes the phosphorylation of pantothenate (Pan), the first step in CoA biosynthesis. The protein is Type III pantothenate kinase of Burkholderia mallei (strain ATCC 23344).